Reading from the N-terminus, the 162-residue chain is Putative 4-hydroxy-4-methyl-2-oxoglutarate aldolase (162 aa).

Substrate is bound by residues 75-78 (GDML) and Arg-97. Residue Asp-98 participates in a divalent metal cation binding.

Belongs to the class II aldolase/RraA-like family. Homotrimer. A divalent metal cation serves as cofactor.

It catalyses the reaction 4-hydroxy-4-methyl-2-oxoglutarate = 2 pyruvate. The catalysed reaction is oxaloacetate + H(+) = pyruvate + CO2. Functionally, catalyzes the aldol cleavage of 4-hydroxy-4-methyl-2-oxoglutarate (HMG) into 2 molecules of pyruvate. Also contains a secondary oxaloacetate (OAA) decarboxylase activity due to the common pyruvate enolate transition state formed following C-C bond cleavage in the retro-aldol and decarboxylation reactions. This chain is Putative 4-hydroxy-4-methyl-2-oxoglutarate aldolase, found in Ectopseudomonas mendocina (strain ymp) (Pseudomonas mendocina).